A 31-amino-acid chain; its full sequence is Photosystem II reaction center protein T (31 aa).

A helical membrane pass occupies residues 3 to 23; it reads SVAYILILTMALAVLFFAIAF.

It belongs to the PsbT family. As to quaternary structure, PSII is composed of 1 copy each of membrane proteins PsbA, PsbB, PsbC, PsbD, PsbE, PsbF, PsbH, PsbI, PsbJ, PsbK, PsbL, PsbM, PsbT, PsbX, PsbY, PsbZ, Psb30/Ycf12, peripheral proteins PsbO, CyanoQ (PsbQ), PsbU, PsbV and a large number of cofactors. It forms dimeric complexes.

Its subcellular location is the cellular thylakoid membrane. Found at the monomer-monomer interface of the photosystem II (PS II) dimer, plays a role in assembly and dimerization of PSII. PSII is a light-driven water plastoquinone oxidoreductase, using light energy to abstract electrons from H(2)O, generating a proton gradient subsequently used for ATP formation. This chain is Photosystem II reaction center protein T, found in Gloeothece citriformis (strain PCC 7424) (Cyanothece sp. (strain PCC 7424)).